Reading from the N-terminus, the 660-residue chain is UvrABC system protein B (660 aa).

The region spanning 24–177 (KGFKEGNQFE…DDLARALIDL (154 aa)) is the Helicase ATP-binding domain. 37–44 (GVTGSGKT) provides a ligand contact to ATP. A Beta-hairpin motif is present at residues 90 to 113 (YYDYYQPEAYVPQSDTYIAKDSSV). The Helicase C-terminal domain occupies 428 to 594 (QIDDLVSEVN…TIQKSVRDLI (167 aa)). In terms of domain architecture, UVR spans 620–655 (EKHIADIEKKMKKAAAELNFEAAAEYRDKLIMLKNT).

This sequence belongs to the UvrB family. In terms of assembly, forms a heterotetramer with UvrA during the search for lesions. Interacts with UvrC in an incision complex.

The protein localises to the cytoplasm. Its function is as follows. The UvrABC repair system catalyzes the recognition and processing of DNA lesions. A damage recognition complex composed of 2 UvrA and 2 UvrB subunits scans DNA for abnormalities. Upon binding of the UvrA(2)B(2) complex to a putative damaged site, the DNA wraps around one UvrB monomer. DNA wrap is dependent on ATP binding by UvrB and probably causes local melting of the DNA helix, facilitating insertion of UvrB beta-hairpin between the DNA strands. Then UvrB probes one DNA strand for the presence of a lesion. If a lesion is found the UvrA subunits dissociate and the UvrB-DNA preincision complex is formed. This complex is subsequently bound by UvrC and the second UvrB is released. If no lesion is found, the DNA wraps around the other UvrB subunit that will check the other stand for damage. The chain is UvrABC system protein B from Agathobacter rectalis (strain ATCC 33656 / DSM 3377 / JCM 17463 / KCTC 5835 / VPI 0990) (Eubacterium rectale).